Here is a 61-residue protein sequence, read N- to C-terminus: Large ribosomal subunit protein bL32 (61 aa).

Residues 1–19 (MAHPKRRQSKTRTAKRRTH) are compositionally biased toward basic residues. The disordered stretch occupies residues 1–20 (MAHPKRRQSKTRTAKRRTHD).

This sequence belongs to the bacterial ribosomal protein bL32 family.

This chain is Large ribosomal subunit protein bL32, found in Bacteroides fragilis (strain YCH46).